The primary structure comprises 692 residues: Paramyosin (692 aa).

The segment at Met1–Leu15 is nonhelical region. Residues Leu16 to Gln692 adopt a coiled-coil conformation. The disordered stretch occupies residues Thr26–Lys57.

This sequence belongs to the paramyosin family. In terms of assembly, homodimer.

The protein localises to the cytoplasm. The protein resides in the myofibril. Its function is as follows. Paramyosin is a major structural component of many thick filaments isolated from invertebrate muscles. This is Paramyosin from Dermatophagoides farinae (American house dust mite).